The sequence spans 66 residues: Large ribosomal subunit protein bL35 (66 aa).

This sequence belongs to the bacterial ribosomal protein bL35 family.

The chain is Large ribosomal subunit protein bL35 from Bradyrhizobium diazoefficiens (strain JCM 10833 / BCRC 13528 / IAM 13628 / NBRC 14792 / USDA 110).